The primary structure comprises 351 residues: Flagellin (351 aa).

This sequence belongs to the bacterial flagellin family.

Its subcellular location is the secreted. It localises to the bacterial flagellum. Its function is as follows. Flagellin is the subunit protein which polymerizes to form the filaments of bacterial flagella. In Serratia marcescens, this protein is Flagellin (fliC).